Here is a 369-residue protein sequence, read N- to C-terminus: Glutamate 5-kinase (369 aa).

An ATP-binding site is contributed by K9. Residues S49, D136, and N148 each coordinate substrate. Residues 168–169 (TD) and 210–216 (TGGMLTK) contribute to the ATP site. Residues 275–355 (QGSIWVDKGA…KGVLIYRDDW (81 aa)) form the PUA domain.

Belongs to the glutamate 5-kinase family.

The protein resides in the cytoplasm. It carries out the reaction L-glutamate + ATP = L-glutamyl 5-phosphate + ADP. Its pathway is amino-acid biosynthesis; L-proline biosynthesis; L-glutamate 5-semialdehyde from L-glutamate: step 1/2. Its function is as follows. Catalyzes the transfer of a phosphate group to glutamate to form L-glutamate 5-phosphate. This is Glutamate 5-kinase from Streptococcus pneumoniae (strain Hungary19A-6).